A 165-amino-acid polypeptide reads, in one-letter code: Transcriptional repressor NrdR (165 aa).

Residues 3 to 34 (CPFCRHPDSRVVDSREADEGQAIRRRRSCPEC) fold into a zinc finger. The 91-residue stretch at 46–136 (LSVVKRSGVT…VYKSFSSAAD (91 aa)) folds into the ATP-cone domain.

This sequence belongs to the NrdR family. It depends on Zn(2+) as a cofactor.

Negatively regulates transcription of bacterial ribonucleotide reductase nrd genes and operons by binding to NrdR-boxes. In Rhodococcus erythropolis (strain PR4 / NBRC 100887), this protein is Transcriptional repressor NrdR.